The primary structure comprises 805 residues: Translation initiation factor IF-2 (805 aa).

2 disordered regions span residues 68-89 and 141-215; these read VVTEQAQAPAEVEEKKEEEKKE and KEKE…KEKK. Over residues 79 to 89 the composition is skewed to basic and acidic residues; it reads VEEKKEEEKKE. Positions 306-474 constitute a tr-type G domain; it reads PRPPIVVVMG…MILLLADILE (169 aa). The G1 stretch occupies residues 315 to 322; that stretch reads GHVDHGKT. 315 to 322 lines the GTP pocket; that stretch reads GHVDHGKT. A G2 region spans residues 340 to 344; it reads GITQH. The interval 362–365 is G3; that stretch reads DTPG. GTP contacts are provided by residues 362–366 and 416–419; these read DTPGH and NKID. The G4 stretch occupies residues 416 to 419; sequence NKID. The interval 452–454 is G5; that stretch reads SAK.

The protein belongs to the TRAFAC class translation factor GTPase superfamily. Classic translation factor GTPase family. IF-2 subfamily.

It localises to the cytoplasm. Its function is as follows. One of the essential components for the initiation of protein synthesis. Protects formylmethionyl-tRNA from spontaneous hydrolysis and promotes its binding to the 30S ribosomal subunits. Also involved in the hydrolysis of GTP during the formation of the 70S ribosomal complex. This Aquifex aeolicus (strain VF5) protein is Translation initiation factor IF-2 (infB).